Consider the following 102-residue polypeptide: Large ribosomal subunit protein P1 (102 aa).

The disordered stretch occupies residues 69-91 (APAAAAEEKKEEEKKEEKKEEDT). The span at 74 to 90 (AEEKKEEEKKEEKKEED) shows a compositional bias: basic and acidic residues.

The protein belongs to the eukaryotic ribosomal protein P1/P2 family. As to quaternary structure, part of the 50S ribosomal subunit. Homodimer, it forms part of the ribosomal stalk which helps the ribosome interact with GTP-bound translation factors. Forms a heptameric uL10/P0(P1)2(P1)2(P1)2 complex, where uL10/P0 forms an elongated spine to which the P1 dimers bind in a sequential fashion.

Functionally, forms part of the ribosomal stalk, playing a central role in the interaction of the ribosome with GTP-bound translation factors. The protein is Large ribosomal subunit protein P1 of Methanocaldococcus jannaschii (strain ATCC 43067 / DSM 2661 / JAL-1 / JCM 10045 / NBRC 100440) (Methanococcus jannaschii).